The chain runs to 118 residues: uncharacterized protein (118 aa).

This is an uncharacterized protein from Escherichia coli (strain UTI89 / UPEC).